The primary structure comprises 254 residues: Chymotrypsin-like serine proteinase (254 aa).

A signal peptide spans 1-18 (MNALLNILLCTLAATALA). Positions 19 to 23 (EISPN) are cleaved as a propeptide — activation peptide. The Peptidase S1 domain occupies 24–254 (IVGGSNAAAG…SSFYNWVQTQ (231 aa)). Cysteine 53 and cysteine 69 are oxidised to a cystine. Active-site charge relay system residues include histidine 68 and aspartate 117. Cystine bridges form between cysteine 146–cysteine 218, cysteine 181–cysteine 199, and cysteine 208–cysteine 233. Serine 212 serves as the catalytic Charge relay system.

It belongs to the peptidase S1 family. Monomer. In terms of tissue distribution, expressed specifically in the distal quarter of the intestine.

Its subcellular location is the secreted. It is found in the extracellular space. Its activity is regulated as follows. Activated by an autocatalytic mechanism. Functionally, specificity similar to chymotrypsin. The sequence is that of Chymotrypsin-like serine proteinase from Haliotis rufescens (California red abalone).